The primary structure comprises 405 residues: Putative arsenical pump-driving ATPase (405 aa).

8-15 (GKGGVGKT) contributes to the ATP binding site.

This sequence belongs to the arsA ATPase family.

The catalysed reaction is arsenite(in) + ATP + H2O = arsenite(out) + ADP + phosphate + H(+). Anion-transporting ATPase. Catalyzes the extrusion of arsenite. The polypeptide is Putative arsenical pump-driving ATPase (Chlorobaculum tepidum (strain ATCC 49652 / DSM 12025 / NBRC 103806 / TLS) (Chlorobium tepidum)).